A 428-amino-acid chain; its full sequence is Beta-1,3-galactosyl-O-glycosyl-glycoprotein beta-1,6-N-acetylglucosaminyltransferase (428 aa).

Residues 1 to 9 (MLRTLLRRR) lie on the Cytoplasmic side of the membrane. The tract at residues 5-9 (LLRRR) is mediates interaction with GOLPH3 and is necessary and sufficient for localization to the Golgi. A helical; Signal-anchor for type II membrane protein membrane pass occupies residues 10–32 (LFSYPTKYYFMVLVLSLITFSVL). The stem region stretch occupies residues 33 to 121 (RIHQKPEFVS…EPLSKEEAEF (89 aa)). Residues 33-428 (RIHQKPEFVS…RHKALETLKH (396 aa)) lie on the Lumenal side of the membrane. Residues N58 and N95 are each glycosylated (N-linked (GlcNAc...) asparagine). 4 cysteine pairs are disulfide-bonded: C59–C413, C100–C172, C151–C199, and C372–C381. A catalytic region spans residues 122-428 (PIAYSIVVHH…RHKALETLKH (307 aa)). Residues 128–130 (VVH), 155–157 (DTK), and Y187 contribute to the UDP-N-acetyl-alpha-D-glucosamine site. A glycoprotein is bound by residues E243, K251, R254, E320, K341, and Y358. Residue E320 is the Nucleophile of the active site. 2 residues coordinate UDP-N-acetyl-alpha-D-glucosamine: R378 and K401.

It belongs to the glycosyltransferase 14 family. Interacts with GOLPH3; may control GCNT1 retention in the Golgi. Highly expressed in activated T-lymphocytes and myeloid cells.

The protein localises to the golgi apparatus membrane. It carries out the reaction a 3-O-[beta-D-galactosyl-(1-&gt;3)-N-acetyl-alpha-D-galactosaminyl]-L-seryl-[protein] + UDP-N-acetyl-alpha-D-glucosamine = 3-O-{beta-D-galactosyl-(1-&gt;3)-[N-acetyl-beta-D-glucosaminyl-(1-&gt;6)]-N-acetyl-alpha-D-galactosaminyl}-L-seryl-[protein] + UDP + H(+). The catalysed reaction is a 3-O-[beta-D-galactosyl-(1-&gt;3)-N-acetyl-alpha-D-galactosaminyl]-L-threonyl-[protein] + UDP-N-acetyl-alpha-D-glucosamine = a 3-O-{beta-D-galactosyl-(1-&gt;3)-[N-acetyl-beta-D-glucosaminyl-(1-&gt;6)]-N-acetyl-alpha-D-galactosaminyl}-L-threonyl-[protein] + UDP + H(+). It catalyses the reaction a globoside GalGb4Cer + UDP-N-acetyl-alpha-D-glucosamine = a globoside GlcNAc-(beta1-&gt;6)-GalGb4Cer + UDP + H(+). The enzyme catalyses a ganglioside GA1 + UDP-N-acetyl-alpha-D-glucosamine = a ganglioside beta-D-GlcNAc-(1-&gt;6)-GA1 + UDP + H(+). The protein operates within protein modification; protein glycosylation. It functions in the pathway glycolipid biosynthesis. Its function is as follows. Glycosyltransferase that catalyzes the transfer of an N-acetylglucosamine (GlcNAc) moiety in beta1-6 linkage from UDP-GlcNAc onto mucin-type core 1 O-glycan to form the branched mucin-type core 2 O-glycan. The catalysis is metal ion-independent and occurs with inversion of the anomeric configuration of sugar donor. Selectively involved in synthesis of mucin-type core 2 O-glycans that serve as scaffolds for the display of selectin ligand sialyl Lewis X epitope by myeloid cells, with an impact on homeostasis and recruitment to inflammatory sites. Can also act on glycolipid substrates. Transfers GlcNAc moiety to GalGb4Cer globosides in a reaction step to the synthesis of stage-specific embryonic antigen 1 (SSEA-1) determinant. Can use Galbeta1-3GalNAcalpha1- and Galbeta1-3GalNAcbeta1- oligosaccharide derivatives as acceptor substrates. The sequence is that of Beta-1,3-galactosyl-O-glycosyl-glycoprotein beta-1,6-N-acetylglucosaminyltransferase (GCNT1) from Homo sapiens (Human).